Reading from the N-terminus, the 267-residue chain is Undecaprenyl-diphosphatase (267 aa).

Helical transmembrane passes span 1 to 21 (MTLW…FLPI), 39 to 59 (AGVA…LFYY), 85 to 105 (AKLG…GFMV), 117 to 137 (LLIA…DFWG), 189 to 209 (FSFL…LWKL), 220 to 240 (LIAL…ALFI), and 246 to 266 (VGMM…FFVF).

This sequence belongs to the UppP family.

The protein resides in the cell inner membrane. The enzyme catalyses di-trans,octa-cis-undecaprenyl diphosphate + H2O = di-trans,octa-cis-undecaprenyl phosphate + phosphate + H(+). Functionally, catalyzes the dephosphorylation of undecaprenyl diphosphate (UPP). Confers resistance to bacitracin. The protein is Undecaprenyl-diphosphatase of Dichelobacter nodosus (strain VCS1703A).